Consider the following 184-residue polypeptide: Probable DNA-directed RNA polymerase subunit delta (184 aa).

One can recognise an HTH HARE-type domain in the interval 14 to 82 (KSFIDMAHTL…GENNWGLRDW (69 aa)). The tract at residues 114-184 (LLGEEEEEID…FNDDPDDDKI (71 aa)) is disordered. Positions 117 to 184 (EEEEEIDDQE…FNDDPDDDKI (68 aa)) are enriched in acidic residues.

It belongs to the RpoE family. As to quaternary structure, RNAP is composed of a core of 2 alpha, a beta and a beta' subunits. The core is associated with a delta subunit and one of several sigma factors.

In terms of biological role, participates in both the initiation and recycling phases of transcription. In the presence of the delta subunit, RNAP displays an increased specificity of transcription, a decreased affinity for nucleic acids, and an increased efficiency of RNA synthesis because of enhanced recycling. This chain is Probable DNA-directed RNA polymerase subunit delta, found in Staphylococcus carnosus (strain TM300).